The following is a 345-amino-acid chain: MSKQSLSYKDAGVDINAGNTLVERIKSDVKRTTRPEVIGGLGGFGALCALPSKYKDPILVSGTDGVGTKLRLAIDLKKHDTIGVDLVAMCVNDLVVQGAEPLFFLDYYATGKLDVDVAADVIKGIADGCVQAGCALVGGETAEMPGMYHTGDYDLAGFCVGVVEKSEIIDGSNVKAGDALLALASSGPHSNGYSLIRKVIEVSGIDPTTTQLAEHSFAEQVLAPTKIYVKPVLQLIKHTDVHAICHLTGGGFWENIPRVLPSSVKAVINEKSWEWHPIFKWLQEQGNIDRYEMYRTFNCGVGMIIALPQEDVETALALLQQVGEKAWVIGKIEHANADEEKVVIC.

Belongs to the AIR synthase family.

It localises to the cytoplasm. The enzyme catalyses 2-formamido-N(1)-(5-O-phospho-beta-D-ribosyl)acetamidine + ATP = 5-amino-1-(5-phospho-beta-D-ribosyl)imidazole + ADP + phosphate + H(+). It functions in the pathway purine metabolism; IMP biosynthesis via de novo pathway; 5-amino-1-(5-phospho-D-ribosyl)imidazole from N(2)-formyl-N(1)-(5-phospho-D-ribosyl)glycinamide: step 2/2. The chain is Phosphoribosylformylglycinamidine cyclo-ligase from Histophilus somni (strain 129Pt) (Haemophilus somnus).